The sequence spans 758 residues: Vitamin K-dependent gamma-carboxylase (758 aa).

Residues 1-21 are disordered; that stretch reads MAVSARSARTSPGSDKVQKDK. Ala2 carries the post-translational modification N-acetylalanine. Over 2-60 the chain is Cytoplasmic; it reads AVSARSARTSPGSDKVQKDKAELISGPRQDSLMGKLLGFEWTDLSSWRRLVTLLNRPTD. A helical transmembrane segment spans residues 61–81; it reads PASLAVFRFLFGFLMVLDIPQ. At 82 to 113 the chain is on the lumenal side; sequence ERGLSSLDRKYLDGLDVCRFPLLDALRPLPLD. A disulfide bond links Cys99 and Cys450. The helical transmembrane segment at 114 to 134 threads the bilayer; it reads WMYLVYTIMFLGALGMMLGLC. Residues 135-136 are Cytoplasmic-facing; it reads YR. Residues 137 to 157 form a helical membrane-spanning segment; the sequence is ISCVLFLLPYWYVFLLDKTSW. Over 158 to 292 the chain is Lumenal; the sequence is NNHSYLYGLL…VSYFHCMNSQ (135 aa). Residues 293–313 form a helical membrane-spanning segment; the sequence is LFSIGMFSYVMLASSPLFCSP. Residues 314–361 lie on the Cytoplasmic side of the membrane; sequence EWPRKLVSYCPQRLQELLPLKAAPQPSVSCVYKRSRGKSGQKPGLRHQ. A helical membrane pass occupies residues 362–382; it reads LGAAFTLLYLLEQLFLPYSHF. At 383–758 the chain is on the lumenal side; it reads LTQGYNNWTN…SNPDPVHSEF (376 aa). The interval 732-758 is disordered; it reads GELSPSNMDSSHSNPPESNPDPVHSEF. Polar residues predominate over residues 735 to 747; sequence SPSNMDSSHSNPP.

This sequence belongs to the vitamin K-dependent gamma-carboxylase family. Monomer. May interact with CALU.

It localises to the endoplasmic reticulum membrane. The enzyme catalyses 4-carboxy-L-glutamyl-[protein] + 2,3-epoxyphylloquinone + H2O + H(+) = phylloquinol + L-glutamyl-[protein] + CO2 + O2. In terms of biological role, mediates the vitamin K-dependent carboxylation of glutamate residues to calcium-binding gamma-carboxyglutamate (Gla) residues with the concomitant conversion of the reduced hydroquinone form of vitamin K to vitamin K epoxide. Catalyzes gamma-carboxylation of various proteins, such as blood coagulation factors (F2, F7, F9 and F10), osteocalcin (BGLAP) or matrix Gla protein (MGP). In Pongo abelii (Sumatran orangutan), this protein is Vitamin K-dependent gamma-carboxylase (GGCX).